Reading from the N-terminus, the 93-residue chain is UPF0358 protein YlaN (93 aa).

It belongs to the UPF0358 family.

Functionally, essential for cell growth and for normal cell shape. In Bacillus subtilis (strain 168), this protein is UPF0358 protein YlaN (ylaN).